We begin with the raw amino-acid sequence, 994 residues long: Chloride channel protein E (994 aa).

The interval 1–33 is disordered; that stretch reads MTRKENEESESLSSSSSPIDNSNNNNNNNNHSI. Over 1–163 the chain is Cytoplasmic; that stretch reads MTRKENEESE…HWLGKERIST (163 aa). Low complexity predominate over residues 11-32; it reads SLSSSSSPIDNSNNNNNNNNHS. A run of 11 helical transmembrane segments spans residues 164 to 184, 227 to 247, 271 to 291, 300 to 320, 334 to 354, 362 to 382, 410 to 430, 449 to 469, 505 to 525, 527 to 547, and 554 to 574; these read LLFI…CDFL, IVFV…ISFI, VLGF…SAAG, FMHA…FGAI, ALTS…LFAI, VMGN…IFFL, LITF…FVFI, IILV…AGPL, LLVF…LPIP, GAIT…GEIL, and QAIE…SGTI. Residues 644 to 705 enclose the CBS 1 domain; the sequence is MKKNINYLSM…LDIHIENIEQ (62 aa). Disordered stretches follow at residues 715–767, 802–822, and 846–872; these read FVNN…NSEN, IKPN…SDFE, and DENS…GDGI. 2 stretches are compositionally biased toward low complexity: residues 717–764 and 809–822; these read NNNN…NSNN and SSSN…SDFE. Residues 859-870 show a composition bias toward acidic residues; sequence HDDEDDDEEEGD. The CBS 2 domain maps to 944–994; it reads MDLAPSQVPDLTPLNKVFHLFTMLGLGFTYVTSLGKLVGVITKNSLMEQDL.

This sequence belongs to the chloride channel (TC 2.A.49) family.

It localises to the membrane. Voltage-gated chloride channel. Chloride channels may have several functions including the regulation of cell volume, membrane potential stabilization and signal transduction. The sequence is that of Chloride channel protein E (clcE) from Dictyostelium discoideum (Social amoeba).